The following is a 304-amino-acid chain: Germ cell-specific gene 1-like protein (304 aa).

Residues 1 to 8 (MKTTRKCR) are Cytoplasmic-facing. Residues 9-29 (ALLSVGLNLLALLFSTTAFIT) traverse the membrane as a helical segment. The Extracellular portion of the chain corresponds to 30–112 (TYWCEGTQRV…FIDLAPASER (83 aa)). The helical transmembrane segment at 113 to 133 (GVLWLSVVSEVLYIMLLVVGF) threads the bilayer. The Cytoplasmic portion of the chain corresponds to 134 to 153 (SLMCLELFHSSNVIDGLKLN). A helical transmembrane segment spans residues 154-174 (AFAAVFTVLSGLLGMVAHMMY). Topologically, residues 175–197 (TQVFQITVSLGPEDWRPHTWDYG) are extracellular. A helical transmembrane segment spans residues 198-218 (WSFCMAWGSFTCCMAASVTTL). Residues 219–304 (NSYTKTVIEF…NTESLGEEQC (86 aa)) lie on the Cytoplasmic side of the membrane. Residues 266–278 (VDVYPSHGSSHGN) show a composition bias toward polar residues. The segment at 266-304 (VDVYPSHGSSHGNSRGKMRSPPAPVDQGDNTESLGEEQC) is disordered.

The protein belongs to the GSG1 family. In terms of assembly, component of the AMPAR complex.

The protein localises to the cell membrane. It localises to the synapse. As a component of the AMPAR complex, modifies AMPA receptor (AMPAR) gating. The protein is Germ cell-specific gene 1-like protein (gsg1l) of Danio rerio (Zebrafish).